We begin with the raw amino-acid sequence, 492 residues long: Bifunctional protein GlmU (492 aa).

Residues Met1–Arg241 form a pyrophosphorylase region. UDP-N-acetyl-alpha-D-glucosamine is bound by residues Leu12–Gly15, Lys26, Gln83, and Gly88–Thr89. Asp114 contributes to the Mg(2+) binding site. The UDP-N-acetyl-alpha-D-glucosamine site is built by Gly151, Glu166, Asn181, and Asn239. Position 239 (Asn239) interacts with Mg(2+). The linker stretch occupies residues Val242 to Ala262. The N-acetyltransferase stretch occupies residues Gly263–Pro492. The UDP-N-acetyl-alpha-D-glucosamine site is built by Arg344 and Lys362. The Proton acceptor role is filled by His374. UDP-N-acetyl-alpha-D-glucosamine is bound by residues Tyr377 and Asn388. Residues Ala391, Asn397–Tyr398, and Ala434 contribute to the acetyl-CoA site. Residues Pro443–Pro492 form a disordered region.

It in the N-terminal section; belongs to the N-acetylglucosamine-1-phosphate uridyltransferase family. The protein in the C-terminal section; belongs to the transferase hexapeptide repeat family. Homotrimer. Mg(2+) is required as a cofactor.

It localises to the cytoplasm. The catalysed reaction is alpha-D-glucosamine 1-phosphate + acetyl-CoA = N-acetyl-alpha-D-glucosamine 1-phosphate + CoA + H(+). The enzyme catalyses N-acetyl-alpha-D-glucosamine 1-phosphate + UTP + H(+) = UDP-N-acetyl-alpha-D-glucosamine + diphosphate. The protein operates within nucleotide-sugar biosynthesis; UDP-N-acetyl-alpha-D-glucosamine biosynthesis; N-acetyl-alpha-D-glucosamine 1-phosphate from alpha-D-glucosamine 6-phosphate (route II): step 2/2. It participates in nucleotide-sugar biosynthesis; UDP-N-acetyl-alpha-D-glucosamine biosynthesis; UDP-N-acetyl-alpha-D-glucosamine from N-acetyl-alpha-D-glucosamine 1-phosphate: step 1/1. Its pathway is bacterial outer membrane biogenesis; LPS lipid A biosynthesis. Its function is as follows. Catalyzes the last two sequential reactions in the de novo biosynthetic pathway for UDP-N-acetylglucosamine (UDP-GlcNAc). The C-terminal domain catalyzes the transfer of acetyl group from acetyl coenzyme A to glucosamine-1-phosphate (GlcN-1-P) to produce N-acetylglucosamine-1-phosphate (GlcNAc-1-P), which is converted into UDP-GlcNAc by the transfer of uridine 5-monophosphate (from uridine 5-triphosphate), a reaction catalyzed by the N-terminal domain. The sequence is that of Bifunctional protein GlmU from Mycobacterium ulcerans (strain Agy99).